We begin with the raw amino-acid sequence, 193 residues long: uncharacterized protein (193 aa).

This is an uncharacterized protein from Mycoplasma pneumoniae (strain ATCC 29342 / M129 / Subtype 1) (Mycoplasmoides pneumoniae).